The chain runs to 425 residues: Phosphoribosylamine--glycine ligase (425 aa).

The 207-residue stretch at 109 to 315 (KALMQEAGIP…LEELILACVQ (207 aa)) folds into the ATP-grasp domain. 135–195 (IQAQGAPIVV…EECLTGQEVS (61 aa)) is an ATP binding site. Mg(2+) contacts are provided by glutamate 285 and asparagine 287.

This sequence belongs to the GARS family. The cofactor is Mg(2+). Requires Mn(2+) as cofactor.

It carries out the reaction 5-phospho-beta-D-ribosylamine + glycine + ATP = N(1)-(5-phospho-beta-D-ribosyl)glycinamide + ADP + phosphate + H(+). It participates in purine metabolism; IMP biosynthesis via de novo pathway; N(1)-(5-phospho-D-ribosyl)glycinamide from 5-phospho-alpha-D-ribose 1-diphosphate: step 2/2. The chain is Phosphoribosylamine--glycine ligase from Nostoc sp. (strain PCC 7120 / SAG 25.82 / UTEX 2576).